The primary structure comprises 351 residues: D-alanine--D-alanine ligase (351 aa).

One can recognise an ATP-grasp domain in the interval 135 to 343 (NQIFLQSGQK…MEEVFSDLIE (209 aa)). An ATP-binding site is contributed by 167 to 222 (LETLGFPQFLKPVEGGSSVSVYKITNREQLKEKLALIFESDSKVMSQSFLTGIEVS). Mg(2+) is bound by residues D298, E310, and N312.

This sequence belongs to the D-alanine--D-alanine ligase family. Mg(2+) is required as a cofactor. Mn(2+) serves as cofactor.

The protein localises to the cytoplasm. The enzyme catalyses 2 D-alanine + ATP = D-alanyl-D-alanine + ADP + phosphate + H(+). Its pathway is cell wall biogenesis; peptidoglycan biosynthesis. In terms of biological role, cell wall formation. The polypeptide is D-alanine--D-alanine ligase (Leptospira interrogans serogroup Icterohaemorrhagiae serovar Lai (strain 56601)).